A 416-amino-acid polypeptide reads, in one-letter code: UDP-N-acetylmuramoylalanine--D-glutamate ligase (416 aa).

Position 108–114 (108–114) interacts with ATP; it reads GTTGKTT.

It belongs to the MurCDEF family.

It is found in the cytoplasm. The catalysed reaction is UDP-N-acetyl-alpha-D-muramoyl-L-alanine + D-glutamate + ATP = UDP-N-acetyl-alpha-D-muramoyl-L-alanyl-D-glutamate + ADP + phosphate + H(+). The protein operates within cell wall biogenesis; peptidoglycan biosynthesis. Cell wall formation. Catalyzes the addition of glutamate to the nucleotide precursor UDP-N-acetylmuramoyl-L-alanine (UMA). In Chlamydia trachomatis serovar L2 (strain ATCC VR-902B / DSM 19102 / 434/Bu), this protein is UDP-N-acetylmuramoylalanine--D-glutamate ligase.